A 1412-amino-acid chain; its full sequence is DNA-directed RNA polymerase subunit beta' (1412 aa).

Residues C70, C72, C85, and C88 each coordinate Zn(2+). D460, D462, and D464 together coordinate Mg(2+). Zn(2+)-binding residues include C814, C888, C895, and C898. The disordered stretch occupies residues 1378-1412; the sequence is EREAARQLANPFEDAPVTVDADAPQSDAGQEGSAE.

It belongs to the RNA polymerase beta' chain family. The RNAP catalytic core consists of 2 alpha, 1 beta, 1 beta' and 1 omega subunit. When a sigma factor is associated with the core the holoenzyme is formed, which can initiate transcription. Requires Mg(2+) as cofactor. Zn(2+) serves as cofactor.

The enzyme catalyses RNA(n) + a ribonucleoside 5'-triphosphate = RNA(n+1) + diphosphate. Functionally, DNA-dependent RNA polymerase catalyzes the transcription of DNA into RNA using the four ribonucleoside triphosphates as substrates. The polypeptide is DNA-directed RNA polymerase subunit beta' (Bordetella petrii (strain ATCC BAA-461 / DSM 12804 / CCUG 43448)).